The primary structure comprises 437 residues: Phenylacetate-coenzyme A ligase (437 aa).

This sequence belongs to the phenylacetyl-CoA ligase family. As to quaternary structure, monomer.

The catalysed reaction is 2-phenylacetate + ATP + CoA = phenylacetyl-CoA + AMP + diphosphate. Its pathway is aromatic compound metabolism; phenylacetate degradation. Its function is as follows. Catalyzes the activation of phenylacetic acid (PA) to phenylacetyl-CoA (PA-CoA). The chain is Phenylacetate-coenzyme A ligase (paaK) from Escherichia coli (strain K12).